The following is a 197-amino-acid chain: Recombination protein RecR (197 aa).

The segment at 57 to 72 (CSTCFGITESDPCHLC) adopts a C4-type zinc-finger fold. Residues 79 to 174 (ASICVVEEPQ…KVTRLAHGIP (96 aa)) enclose the Toprim domain.

This sequence belongs to the RecR family.

Its function is as follows. May play a role in DNA repair. It seems to be involved in an RecBC-independent recombinational process of DNA repair. It may act with RecF and RecO. The sequence is that of Recombination protein RecR from Geotalea uraniireducens (strain Rf4) (Geobacter uraniireducens).